Reading from the N-terminus, the 188-residue chain is Elongation factor P (188 aa).

N6-(3,6-diaminohexanoyl)-5-hydroxylysine is present on lysine 34.

It belongs to the elongation factor P family. In terms of processing, may be beta-lysylated on the epsilon-amino group of Lys-34 by the combined action of EpmA and EpmB, and then hydroxylated on the C5 position of the same residue by EpmC (if this protein is present). Lysylation is critical for the stimulatory effect of EF-P on peptide-bond formation. The lysylation moiety may extend toward the peptidyltransferase center and stabilize the terminal 3-CCA end of the tRNA. Hydroxylation of the C5 position on Lys-34 may allow additional potential stabilizing hydrogen-bond interactions with the P-tRNA.

It is found in the cytoplasm. The protein operates within protein biosynthesis; polypeptide chain elongation. Functionally, involved in peptide bond synthesis. Alleviates ribosome stalling that occurs when 3 or more consecutive Pro residues or the sequence PPG is present in a protein, possibly by augmenting the peptidyl transferase activity of the ribosome. Modification of Lys-34 is required for alleviation. The protein is Elongation factor P of Histophilus somni (strain 129Pt) (Haemophilus somnus).